Here is a 34-residue protein sequence, read N- to C-terminus: Beta/mu-theraphotoxin-Pe1a (34 aa).

3 cysteine pairs are disulfide-bonded: C2/C16, C9/C21, and C15/C28.

It belongs to the neurotoxin 10 (Hwtx-1) family. 54 (ProTx-1) subfamily. In terms of tissue distribution, expressed by the venom gland.

It is found in the secreted. Functionally, ion channel impairing toxin that inhibits voltage-gated sodium channels. The recombinantly expressed toxin shows a weak activity against Nav1.7/SCN9A (25% inhibition at 10 uM), and shifts the voltage dependence of channel activation to more depolarized potentials. This Phormingochilus everetti (Malaysian purple earth tiger tarantula) protein is Beta/mu-theraphotoxin-Pe1a.